A 217-amino-acid polypeptide reads, in one-letter code: UPF0502 protein Smlt0097 (217 aa).

This sequence belongs to the UPF0502 family.

The chain is UPF0502 protein Smlt0097 from Stenotrophomonas maltophilia (strain K279a).